Here is a 20-residue protein sequence, read N- to C-terminus: 21 kDa cold shock-induced protein (20 aa).

Basic and acidic residues predominate over residues 1-12; that stretch reads TDSIKETIKETV. A disordered region spans residues 1–20; the sequence is TDSIKETIKETVNHQAEWPY.

The chain is 21 kDa cold shock-induced protein from Streptococcus thermophilus.